The sequence spans 225 residues: uncharacterized protein (225 aa).

This is an uncharacterized protein from Schizosaccharomyces pombe (strain 972 / ATCC 24843) (Fission yeast).